A 640-amino-acid chain; its full sequence is Protein argonaute (640 aa).

The interval 1–100 (MYLNLYEIKI…YIKKKFIDNN (100 aa)) is N-terminal domain. Residues 101–153 (FYYKRGNNYISINDKFPLDSNTNVNAHLTYKIKLYKINERYYISVLPKFTFLS) form a linker L1 region. The PAZ domain stretch occupies residues 154–209 (DKPALESPIKSTYLFNIKSGKTFPYISGLNGVLKIDLGENGIKEVLFPENYYFNFT). Residues 210–291 (SKEAEKFGFS…KYSFYKNDQK (82 aa)) form a linker L2 region. The segment at 292–423 (IKIAFFFSSK…YVYKMGNFIP (132 aa)) is mid domain. Residues 424–640 (ECQPYVIRNL…EWKLYIPYMK (217 aa)) form a PIWI domain region. Catalysis depends on residues Asp445, Glu481, Asp515, and Asn623. Residue Asp445 participates in Mn(2+) binding. The Mn(2+) site is built by Asp515 and Asn623.

The protein belongs to the argonaute family. Long pAgo subfamily. Mn(2+) serves as cofactor.

Functionally, a highly versatile argonaute that uses 5'-phospho- and 5'-OH- guide RNA (gRNA) or DNA (gDNA) to cleave target RNA or ssDNA (tDNA) in all possible combinations; has no detectable activity in the absence of guide. Uses short guide sequences (18-21 nucleotides (nt) on average) to bind complementary target nucleic acids resulting in target cleavage in a site-specific manner. Using 5'-phospho-gRNA or 5'-OH-gRNA the cleavage site is 10 nt downstream of the target residue base-paired with the 5'-end of the gRNA, using 5'-phospho-gDNA the cleavage site is 11 nucleotides (nt) downstream, while with 5'-OH-gDNA the cleavage site is 9 nt downstream. The sequence is that of Protein argonaute from Marinitoga hydrogenitolerans (strain DSM 16785 / JCM 12826 / AT1271).